Consider the following 298-residue polypeptide: HTH-type transcriptional regulator YhaJ (298 aa).

An HTH lysR-type domain is found at 7 to 64 (LTLEALRVMDAIDRRGSFAAAADELGRVPSALSYTMQKLEEELDVVLFDRSGHRTKFT). The segment at residues 24–43 (FAAAADELGRVPSALSYTMQ) is a DNA-binding region (H-T-H motif).

The protein belongs to the LysR transcriptional regulatory family.

In terms of biological role, positive regulator partially required for expression of genes in the locus of effacement (LEE) large pathogenicity island (PAI). Also partially responsible for expression of neighboring gene dlsT (yhaO) during late exponential growth. Binds to DNA of promoter 1 in LEE and DNA from the dlsT promoter region. This chain is HTH-type transcriptional regulator YhaJ (yhaJ), found in Escherichia coli O157:H7.